The following is a 350-amino-acid chain: Histidinol-phosphate aminotransferase (350 aa).

The residue at position 209 (K209) is an N6-(pyridoxal phosphate)lysine.

The protein belongs to the class-II pyridoxal-phosphate-dependent aminotransferase family. Histidinol-phosphate aminotransferase subfamily. As to quaternary structure, homodimer. It depends on pyridoxal 5'-phosphate as a cofactor.

The enzyme catalyses L-histidinol phosphate + 2-oxoglutarate = 3-(imidazol-4-yl)-2-oxopropyl phosphate + L-glutamate. Its pathway is amino-acid biosynthesis; L-histidine biosynthesis; L-histidine from 5-phospho-alpha-D-ribose 1-diphosphate: step 7/9. The protein is Histidinol-phosphate aminotransferase of Citrifermentans bemidjiense (strain ATCC BAA-1014 / DSM 16622 / JCM 12645 / Bem) (Geobacter bemidjiensis).